The following is a 115-amino-acid chain: UPF0738 protein SH1953 (115 aa).

Belongs to the UPF0738 family.

This chain is UPF0738 protein SH1953, found in Staphylococcus haemolyticus (strain JCSC1435).